We begin with the raw amino-acid sequence, 177 residues long: ATP synthase subunit delta (177 aa).

It belongs to the ATPase delta chain family. In terms of assembly, F-type ATPases have 2 components, F(1) - the catalytic core - and F(0) - the membrane proton channel. F(1) has five subunits: alpha(3), beta(3), gamma(1), delta(1), epsilon(1). F(0) has three main subunits: a(1), b(2) and c(10-14). The alpha and beta chains form an alternating ring which encloses part of the gamma chain. F(1) is attached to F(0) by a central stalk formed by the gamma and epsilon chains, while a peripheral stalk is formed by the delta and b chains.

It localises to the cell inner membrane. F(1)F(0) ATP synthase produces ATP from ADP in the presence of a proton or sodium gradient. F-type ATPases consist of two structural domains, F(1) containing the extramembraneous catalytic core and F(0) containing the membrane proton channel, linked together by a central stalk and a peripheral stalk. During catalysis, ATP synthesis in the catalytic domain of F(1) is coupled via a rotary mechanism of the central stalk subunits to proton translocation. Its function is as follows. This protein is part of the stalk that links CF(0) to CF(1). It either transmits conformational changes from CF(0) to CF(1) or is implicated in proton conduction. The sequence is that of ATP synthase subunit delta from Klebsiella pneumoniae subsp. pneumoniae (strain ATCC 700721 / MGH 78578).